The following is a 64-amino-acid chain: Conotoxin VnMLCL-033 (64 aa).

Positions Met1–Pro19 are cleaved as a signal peptide. A propeptide spanning residues Asn20–Asp43 is cleaved from the precursor. The residue at position 63 (Ile63) is an Isoleucine amide.

Belongs to the conotoxin T superfamily. In terms of tissue distribution, expressed by the venom duct.

Its subcellular location is the secreted. The protein is Conotoxin VnMLCL-033 of Conus ventricosus (Mediterranean cone).